The sequence spans 715 residues: Probable phospholipase YOR022C, mitochondrial (715 aa).

Residues 1–22 (MLRFTHRGLPSSTRFRNIFVRL) constitute a mitochondrion transit peptide. Disordered stretches follow at residues 161 to 180 (YPVDKENEGEQKNGSSNKDE), 242 to 268 (TSTSFKAAKTPQTEVADGSNSSKSRSI), and 311 to 340 (YNNADNSQGANASSKIEDGKNSGASDRQIR). Low complexity predominate over residues 242–251 (TSTSFKAAKT). A compositionally biased stretch (polar residues) spans 311–324 (YNNADNSQGANASS). The active site involves S501. One can recognise a DDHD domain in the interval 519 to 700 (LEFQVDNLFF…AAFILKEILS (182 aa)).

Belongs to the PA-PLA1 family.

Its subcellular location is the mitochondrion. Functionally, probable phospholipase that hydrolyzes phosphatidic acid. The sequence is that of Probable phospholipase YOR022C, mitochondrial from Saccharomyces cerevisiae (strain ATCC 204508 / S288c) (Baker's yeast).